The chain runs to 494 residues: Ceramide glucosyltransferase (494 aa).

The Lumenal segment spans residues 1–6 (MPLLMD). A helical transmembrane segment spans residues 7–27 (GLAYAGAIWSLIVFCVQAIGL). Residues 28-337 (YQLFRSYSRP…VRWLRVRKWT (310 aa)) are Cytoplasmic-facing. A short sequence motif (D1) is located at residue Asp95. Asp160 is a short sequence motif (D2). Residue Asp285 is a short sequence motif, D3. The active-site Proton acceptor is Asp285. The (Q/R)XXRW motif lies at 326-330 (RRVRW). A helical membrane pass occupies residues 338 to 358 (VLLATLVEPGVESMVCCMAFA). At 359-380 (HALTTTPWCPNPADWPIPHTWT) the chain is on the lumenal side. The helical transmembrane segment at 381 to 401 (ALWSIWLAAIAVWATLDYVVY) threads the bilayer. Over 402–428 (HFLHSCRSIEKDADSPDFAQGNELMKR) the chain is Cytoplasmic. The helical transmembrane segment at 429-449 (PFGAWILAWIGREILALPIWT) threads the bilayer. Residues 450–494 (RAVLLGTTVTWRGTKFKVRPDQSVVDIPNAGAKSNGIGSTNRKVR) are Lumenal-facing.

Belongs to the glycosyltransferase 2 family.

The protein resides in the golgi apparatus membrane. It carries out the reaction an N-acylsphing-4-enine + UDP-alpha-D-glucose = a beta-D-glucosyl-(1&lt;-&gt;1')-N-acylsphing-4-enine + UDP + H(+). Its pathway is lipid metabolism; sphingolipid metabolism. In terms of biological role, catalyzes the final step in the biosynthesis of the membrane lipid glucosylceramide (GluCer), the transfer of glucose to ceramide. Glucosylceramides play important roles in growth, differentiation and pathogenicity. This is Ceramide glucosyltransferase from Pyricularia oryzae (strain 70-15 / ATCC MYA-4617 / FGSC 8958) (Rice blast fungus).